The chain runs to 464 residues: DNA primase DnaG (464 aa).

The Toprim domain occupies aspartate 198–glutamate 272. The Mg(2+) site is built by glutamate 204, aspartate 246, and aspartate 248. Residues arginine 315–valine 333 show a composition bias toward basic and acidic residues. The interval arginine 315–threonine 351 is disordered.

Belongs to the archaeal DnaG primase family. In terms of assembly, forms a ternary complex with MCM helicase and DNA. Component of the archaeal exosome complex. Mg(2+) serves as cofactor.

It catalyses the reaction ssDNA + n NTP = ssDNA/pppN(pN)n-1 hybrid + (n-1) diphosphate.. Its function is as follows. RNA polymerase that catalyzes the synthesis of short RNA molecules used as primers for DNA polymerase during DNA replication. Also part of the exosome, which is a complex involved in RNA degradation. Acts as a poly(A)-binding protein that enhances the interaction between heteromeric, adenine-rich transcripts and the exosome. This is DNA primase DnaG from Thermococcus kodakarensis (strain ATCC BAA-918 / JCM 12380 / KOD1) (Pyrococcus kodakaraensis (strain KOD1)).